We begin with the raw amino-acid sequence, 120 residues long: Guanidine hydrolase-activating protein A (120 aa).

3 residues coordinate Ni(2+): His2, Glu3, and Glu41. The Zn(2+) site is built by Cys74, Cys77, Cys91, and Cys94.

This sequence belongs to the HypA/HybF family.

Its function is as follows. Involved in the maturation of the nickel-dependent guanidine hydrolase GdmH. Required for nickel insertion into the metal center of GdmH. Seems to be required only for GdmH activation and not for activity. This chain is Guanidine hydrolase-activating protein A, found in Synechocystis sp. (strain ATCC 27184 / PCC 6803 / Kazusa).